We begin with the raw amino-acid sequence, 514 residues long: Serine/threonine protein phosphatase PstP (514 aa).

Residues 1–302 (MARVTLVLRY…RPRWSGRRLA (302 aa)) lie on the Cytoplasmic side of the membrane. The region spanning 9 to 238 (RYAARSDRGL…DNVTVVVADV (230 aa)) is the PPM-type phosphatase domain. Mn(2+) contacts are provided by Asp38, Gly39, Asp118, Ser160, Asp191, and Asp229. Residues 303–323 (FVVALVTVLMTAGLLIGRAII) traverse the membrane as a helical segment. Residues 324 to 514 (RSNYYVADYA…QPGIDCRAAA (191 aa)) lie on the Extracellular side of the membrane. Residues 420–514 (LLPPCPAPRA…QPGIDCRAAA (95 aa)) form a disordered region. The span at 440–480 (TTSETTEPNVTSSPASPSPTTSASAPTGTTPAIPTSASPAA) shows a compositional bias: low complexity.

Requires Mn(2+) as cofactor.

It localises to the cell membrane. It catalyses the reaction O-phospho-L-seryl-[protein] + H2O = L-seryl-[protein] + phosphate. It carries out the reaction O-phospho-L-threonyl-[protein] + H2O = L-threonyl-[protein] + phosphate. Functionally, plays an important role in regulating cell division and growth by reversible phosphorylation signaling. May play important roles in regulating cellular metabolism and signaling pathways, which could mediate the growth and development of the cell. Plays a role in establishing and maintaining infection. This Mycobacterium tuberculosis (strain CDC 1551 / Oshkosh) protein is Serine/threonine protein phosphatase PstP (pstP).